Consider the following 379-residue polypeptide: Putative acetyl-CoA C-acetyltransferase VraB (379 aa).

The Acyl-thioester intermediate role is filled by cysteine 86. Histidine 338 serves as the catalytic Proton acceptor.

It belongs to the thiolase-like superfamily. Thiolase family.

The chain is Putative acetyl-CoA C-acetyltransferase VraB (vraB) from Staphylococcus aureus (strain Mu3 / ATCC 700698).